The following is a 285-amino-acid chain: MATKLQDGNTPCLAATPSEPRPTVLVFDSGVGGLSVYDEIRHLLPDLHYIYAFDNVAFPYGEKSEAFIVERVVAIVTAVQERYPLALAVVACNTASTVSLPALREKFDFPVVGVVPAIKPAARLTANGIVGLLATRGTVKRSYTHELIARFANECQIEMLGSAEMVELAEAKLHGEDVSLDALKRILRPWLRMKEPPDTVVLGCTHFPLLQEELLQVLPEGTRLVDSGAAIARRTAWLLEHEAPDAKSADANIAFCMAMTPEAEQLLPVLQRYGFETLEKLAVLG.

Substrate contacts are provided by residues Asp28–Ser29 and Tyr60–Gly61. Cys92 functions as the Proton donor/acceptor in the catalytic mechanism. Asn93 to Thr94 serves as a coordination point for substrate. Cys204 (proton donor/acceptor) is an active-site residue. A substrate-binding site is contributed by Thr205–His206.

The protein belongs to the aspartate/glutamate racemases family.

The catalysed reaction is L-glutamate = D-glutamate. It functions in the pathway cell wall biogenesis; peptidoglycan biosynthesis. Provides the (R)-glutamate required for cell wall biosynthesis. This chain is Glutamate racemase, found in Shigella flexneri serotype 5b (strain 8401).